The sequence spans 337 residues: Probable RuBisCO transcriptional regulator (337 aa).

Residues 6–63 form the HTH lysR-type domain; sequence FTLDQLRILKAIAVEGSFKRAADSLYVSQPAVSLQVQNLERQLDVPLFDRGGRRAQLT. Positions 23-42 form a DNA-binding region, H-T-H motif; the sequence is FKRAADSLYVSQPAVSLQVQ.

Belongs to the LysR transcriptional regulatory family.

Trans-acting transcriptional regulator of RuBisCO genes (rbcL and rbcS) expression. This is Probable RuBisCO transcriptional regulator (rbcR) from Nostoc sp. (strain PCC 7120 / SAG 25.82 / UTEX 2576).